Consider the following 244-residue polypeptide: MQALLFLMALLLPSGAGAEEIIGGVEAKPHSRPYMAYLKFTTKNGSKERCGGFLIAPQFVMTAAHCNGSEISVILGAHNINKNEPTQQIIKTEKTFVHPKFQYLSGFYDIMLLKLQKKAELNSDVDVISLPSSSDFIKPGKMCWTAGWGKTGKNNPLSVTLREVELRIMDQEACKDHSDYDYQLQVCAGSPTTSKSIGQGDSGGPLVCDSVAHGIASSYEAKAPAVFTRISYYLPWIYKVLKSK.

Residues 1 to 18 (MQALLFLMALLLPSGAGA) form the signal peptide. Residues 19–20 (EE) constitute a propeptide, activation peptide. One can recognise a Peptidase S1 domain in the interval 21–242 (IIGGVEAKPH…YLPWIYKVLK (222 aa)). N44 carries an N-linked (GlcNAc...) asparagine glycan. A disulfide bridge links C50 with C66. Residues H65 and D109 each act as charge relay system in the active site. Cystine bridges form between C143/C208 and C174/C187. Residue S202 is the Charge relay system of the active site.

The protein belongs to the peptidase S1 family. Granzyme subfamily. Mucosal mast cells.

This chain is Mast cell protease 2 (Mcpt2), found in Mus musculus (Mouse).